The following is a 196-amino-acid chain: [1-hydroxy-2-(trimethylamino)ethyl]phosphonate dioxygenase (glycine-betaine-forming) (196 aa).

Tyr-30 is a binding site for [(1R)-1-hydroxy-2-(trimethylamino)ethyl]phosphonate. Fe cation is bound by residues Tyr-30, His-40, His-64, and Asp-65. An HD domain is found at 37 to 156 (MAEHMLQGAT…VAEFEKNPNL (120 aa)). The [(1R)-1-hydroxy-2-(trimethylamino)ethyl]phosphonate site is built by His-68, His-86, His-109, Lys-113, Ser-131, Ser-134, and Arg-163. Fe cation-binding residues include His-86 and His-109. A Fe cation-binding site is contributed by Asp-166.

It depends on Fe cation as a cofactor.

It catalyses the reaction [(1R)-1-hydroxy-2-(trimethylamino)ethyl]phosphonate + O2 = glycine betaine + phosphate + 2 H(+). Functionally, involved in the degradation of the naturally occurring organophosphonate 2-(trimethylammonio)ethylphosphonate (TMAEP). Catalyzes the O(2)-dependent cleavage of (R)-1-hydroxy-2-(trimethylammonio)ethylphosphonate (OH-TMAEP) to yield glycine betaine and phosphate. Is highly specific for its N-trimethylated substrate. This chain is [1-hydroxy-2-(trimethylamino)ethyl]phosphonate dioxygenase (glycine-betaine-forming), found in Leisingera caerulea (Phaeobacter caeruleus).